The primary structure comprises 86 residues: Toxin ICK-18 (86 aa).

The first 19 residues, 1 to 19 (MKTIFALVFCCAIAVVVLG), serve as a signal peptide directing secretion. 4 disulfide bridges follow: C35/C49, C42/C61, C48/C76, and C79/C86.

It belongs to the neurotoxin 21 family. In terms of tissue distribution, expressed by the venom gland.

It is found in the secreted. Functionally, probable neurotoxin with ion channel impairing activity. The polypeptide is Toxin ICK-18 (Trittame loki (Brush-footed trapdoor spider)).